Here is a 557-residue protein sequence, read N- to C-terminus: Ribonuclease J 2 (557 aa).

The Zn(2+) site is built by His76, His78, His144, and Glu166. Substrate is bound at residue 366–370 (HASSH).

Belongs to the metallo-beta-lactamase superfamily. RNA-metabolizing metallo-beta-lactamase-like family. Bacterial RNase J subfamily. As to quaternary structure, homodimer, may be a subunit of the RNA degradosome. Zn(2+) is required as a cofactor.

The protein resides in the cytoplasm. Functionally, an RNase that has 5'-3' exonuclease and possibly endoonuclease activity. Involved in maturation of rRNA and in some organisms also mRNA maturation and/or decay. The polypeptide is Ribonuclease J 2 (Staphylococcus aureus (strain MRSA252)).